We begin with the raw amino-acid sequence, 313 residues long: Ribosomal RNA small subunit methyltransferase H (313 aa).

S-adenosyl-L-methionine-binding positions include 35 to 37, Asp-55, Phe-80, Asp-102, and Gln-109; that span reads GGH.

It belongs to the methyltransferase superfamily. RsmH family.

The protein resides in the cytoplasm. The enzyme catalyses cytidine(1402) in 16S rRNA + S-adenosyl-L-methionine = N(4)-methylcytidine(1402) in 16S rRNA + S-adenosyl-L-homocysteine + H(+). Its function is as follows. Specifically methylates the N4 position of cytidine in position 1402 (C1402) of 16S rRNA. The polypeptide is Ribosomal RNA small subunit methyltransferase H (Shewanella sp. (strain MR-4)).